A 289-amino-acid chain; its full sequence is Probable early E4 33 kDa protein (289 aa).

Belongs to the adenoviridae E4 30 to 34 kDa protein family. Interacts with E1B-55k.

The protein localises to the host nucleus. It is found in the host cytoplasm. Plays a major role to prevent cellular inhibition of viral genome replication by nuclear bodies. Assembles an SCF-like E3 ubiquitin ligase complex based on the cellular proteins ELOB, ELOC, CUL5 and RBX1, in cooperation with viral E1B-55K. This viral RING-type ligase ubiquitinates cellular substrates prior to proteasomal degradation: p53/TP53, LIG4, MRE11-RAD50-NBS1 (MRN) complex, ITGA3, DAXX and BLM. This is Probable early E4 33 kDa protein from Mus musculus (Mouse).